Consider the following 68-residue polypeptide: Phage-like element PBSX protein XtrA (68 aa).

This sequence to B.subtilis YqaO.

This chain is Phage-like element PBSX protein XtrA (xtrA), found in Bacillus subtilis (strain 168).